The sequence spans 620 residues: 1-deoxy-D-xylulose-5-phosphate synthase (620 aa).

Thiamine diphosphate is bound by residues histidine 80 and 121–123; that span reads GHS. Aspartate 152 provides a ligand contact to Mg(2+). Thiamine diphosphate contacts are provided by residues 153–154, asparagine 181, tyrosine 288, and glutamate 370; that span reads GA. Asparagine 181 contacts Mg(2+).

The protein belongs to the transketolase family. DXPS subfamily. In terms of assembly, homodimer. Requires Mg(2+) as cofactor. Thiamine diphosphate serves as cofactor.

It carries out the reaction D-glyceraldehyde 3-phosphate + pyruvate + H(+) = 1-deoxy-D-xylulose 5-phosphate + CO2. The protein operates within metabolic intermediate biosynthesis; 1-deoxy-D-xylulose 5-phosphate biosynthesis; 1-deoxy-D-xylulose 5-phosphate from D-glyceraldehyde 3-phosphate and pyruvate: step 1/1. Functionally, catalyzes the acyloin condensation reaction between C atoms 2 and 3 of pyruvate and glyceraldehyde 3-phosphate to yield 1-deoxy-D-xylulose-5-phosphate (DXP). The polypeptide is 1-deoxy-D-xylulose-5-phosphate synthase (Salmonella arizonae (strain ATCC BAA-731 / CDC346-86 / RSK2980)).